The sequence spans 56 residues: Small ribosomal subunit protein bS21 (56 aa).

The protein belongs to the bacterial ribosomal protein bS21 family.

The protein is Small ribosomal subunit protein bS21 of Dictyoglomus thermophilum (strain ATCC 35947 / DSM 3960 / H-6-12).